Here is a 338-residue protein sequence, read N- to C-terminus: Lipoate-protein ligase A (338 aa).

The BPL/LPL catalytic domain occupies 29 to 216; it reads PATQRVLFLW…AFFAHYGERV (188 aa). ATP contacts are provided by residues Arg-71, 76-79, and Lys-134; that span reads GAVF. (R)-lipoate is bound at residue Lys-134.

The protein belongs to the LplA family. In terms of assembly, monomer.

The protein resides in the cytoplasm. The catalysed reaction is L-lysyl-[lipoyl-carrier protein] + (R)-lipoate + ATP = N(6)-[(R)-lipoyl]-L-lysyl-[lipoyl-carrier protein] + AMP + diphosphate + H(+). The protein operates within protein modification; protein lipoylation via exogenous pathway; protein N(6)-(lipoyl)lysine from lipoate: step 1/2. It functions in the pathway protein modification; protein lipoylation via exogenous pathway; protein N(6)-(lipoyl)lysine from lipoate: step 2/2. Functionally, catalyzes both the ATP-dependent activation of exogenously supplied lipoate to lipoyl-AMP and the transfer of the activated lipoyl onto the lipoyl domains of lipoate-dependent enzymes. This is Lipoate-protein ligase A from Escherichia coli (strain SMS-3-5 / SECEC).